Here is a 360-residue protein sequence, read N- to C-terminus: Aurora kinase B (360 aa).

In terms of domain architecture, Protein kinase spans phenylalanine 93 to valine 343. ATP contacts are provided by residues leucine 99–valine 107 and lysine 122. Residue aspartate 216 is the Proton acceptor of the active site.

Belongs to the protein kinase superfamily. Ser/Thr protein kinase family. Aurora subfamily. Component of the chromosomal passenger complex (CPC).

It is found in the nucleus. It localises to the chromosome. Its subcellular location is the centromere. The protein localises to the cytoplasm. The protein resides in the cytoskeleton. It is found in the spindle. It localises to the midbody. It catalyses the reaction L-seryl-[protein] + ATP = O-phospho-L-seryl-[protein] + ADP + H(+). It carries out the reaction L-threonyl-[protein] + ATP = O-phospho-L-threonyl-[protein] + ADP + H(+). Kinase activity is stimulated by cell-cycle specific phosphorylation. In terms of biological role, serine/threonine-protein kinase component of the chromosomal passenger complex (CPC), a complex that acts as a key regulator of mitosis. The CPC complex has essential functions at the centromere in ensuring correct chromosome alignment and segregation and is required for chromatin-induced microtubule stabilization and spindle assembly. Involved in the bipolar attachment of spindle microtubules to kinetochores and is a key regulator for the onset of cytokinesis during mitosis. Required for central/midzone spindle assembly and cleavage furrow formation. Key component of the cytokinesis checkpoint, a process required to delay abscission to prevent both premature resolution of intercellular chromosome bridges and accumulation of DNA damage. Phosphorylates 'Ser-10' of histone H3 during mitosis. The chain is Aurora kinase B from Xenopus tropicalis (Western clawed frog).